Reading from the N-terminus, the 253-residue chain is MPLLPSTVGLAGLLFWAGQAVNALIMPNATPAPAQPESTAMRLLSGLEVPRYRRKRHISVRDMNALLDYHNHIRASVYPPAANMEYMVWDKRLARAAEAWATQCIWAHGPSQLMRYVGQNLSIHSGQYRSVVDLMKSWSEEKWHYLFPAPRDCNPHCPWRCDGPTCSHYTQMVWASSNRLGCAIHTCSSISVWGNTWHRAAYLVCNYAIKGNWIGESPYKMGKPCSSCPPSYQGSCNSNMCFKGLKSNKFTWF.

The signal sequence occupies residues 1–24; it reads MPLLPSTVGLAGLLFWAGQAVNAL. Residues 25–56 constitute a propeptide that is removed on maturation; that stretch reads IMPNATPAPAQPESTAMRLLSGLEVPRYRRKR. An SCP domain is found at 67–207; it reads LDYHNHIRAS…HRAAYLVCNY (141 aa). Asn-120 carries an N-linked (GlcNAc...) asparagine glycan.

Belongs to the CRISP family.

The protein localises to the secreted. In terms of biological role, putative serine protease inhibitor. The polypeptide is Peptidase inhibitor R3HDML (R3HDML) (Homo sapiens (Human)).